The following is a 410-amino-acid chain: Transforming growth factor beta-3 proprotein (410 aa).

The signal sequence occupies residues 1-23 (MHLQRALVVLALLNLATISLSLS). Residues Asn-72, Asn-133, and Asn-140 are each glycosylated (N-linked (GlcNAc...) asparagine). Positions 259-261 (RGD) match the Cell attachment site motif. Gln-291 carries the N5-methylglutamine modification. Intrachain disulfides connect Cys-305–Cys-314, Cys-313–Cys-376, Cys-342–Cys-407, and Cys-346–Cys-409.

This sequence belongs to the TGF-beta family. Interacts with ASPN. Latency-associated peptide: Homodimer; disulfide-linked. Latency-associated peptide: Interacts with Transforming growth factor beta-3 (TGF-beta-3) chain; interaction is non-covalent and maintains (TGF-beta-3) in a latent state. Latency-associated peptide: Interacts with LRRC32/GARP; leading to regulate activation of TGF-beta-3 and promote epithelial fusion during palate development. Latency-associated peptide: Interacts (via cell attachment site) with integrins, leading to release of the active TGF-beta-3. Transforming growth factor beta-3: Homodimer; disulfide-linked. Transforming growth factor beta-3: Interacts with TGF-beta receptors (TGFBR1 and TGFBR2), leading to signal transduction. In terms of processing, transforming growth factor beta-3 proprotein: The precursor proprotein is cleaved in the Golgi apparatus to form Transforming growth factor beta-3 (TGF-beta-3) and Latency-associated peptide (LAP) chains, which remain non-covalently linked, rendering TGF-beta-3 inactive. Post-translationally, methylated at Gln-291 by N6AMT1. As to expression, expressed in mammary glands with a slight increase in expression prior to lactation and again increasing at the onset of involution, expression peaks at day 3 of involution.

Its subcellular location is the secreted. The protein localises to the extracellular space. It is found in the extracellular matrix. Transforming growth factor beta-3 proprotein: Precursor of the Latency-associated peptide (LAP) and Transforming growth factor beta-3 (TGF-beta-3) chains, which constitute the regulatory and active subunit of TGF-beta-3, respectively. Functionally, required to maintain the Transforming growth factor beta-3 (TGF-beta-3) chain in a latent state during storage in extracellular matrix. Associates non-covalently with TGF-beta-3 and regulates its activation via interaction with 'milieu molecules', such as LTBP1 and LRRC32/GARP, that control activation of TGF-beta-3. Interaction with integrins results in distortion of the Latency-associated peptide chain and subsequent release of the active TGF-beta-3. Its function is as follows. Transforming growth factor beta-3: Multifunctional protein that regulates embryogenesis and cell differentiation and is required in various processes such as secondary palate development. Activation into mature form follows different steps: following cleavage of the proprotein in the Golgi apparatus, Latency-associated peptide (LAP) and Transforming growth factor beta-3 (TGF-beta-3) chains remain non-covalently linked rendering TGF-beta-3 inactive during storage in extracellular matrix. At the same time, LAP chain interacts with 'milieu molecules', such as LTBP1 and LRRC32/GARP that control activation of TGF-beta-3 and maintain it in a latent state during storage in extracellular milieus. TGF-beta-3 is released from LAP by integrins: integrin-binding results in distortion of the LAP chain and subsequent release of the active TGF-beta-3. Once activated following release of LAP, TGF-beta-3 acts by binding to TGF-beta receptors (TGFBR1 and TGFBR2), which transduce signal. This Mus musculus (Mouse) protein is Transforming growth factor beta-3 proprotein.